The sequence spans 348 residues: Anthranilate phosphoribosyltransferase (348 aa).

5-phospho-alpha-D-ribose 1-diphosphate is bound by residues G91, 94–95, T99, 101–104, 119–127, and S131; these read GD, NIST, and KHGNRSASG. An anthranilate-binding site is contributed by G91. Mg(2+) is bound at residue S103. Residue N122 participates in anthranilate binding. R177 provides a ligand contact to anthranilate. 2 residues coordinate Mg(2+): D236 and E237.

Belongs to the anthranilate phosphoribosyltransferase family. As to quaternary structure, homodimer. Mg(2+) serves as cofactor.

It catalyses the reaction N-(5-phospho-beta-D-ribosyl)anthranilate + diphosphate = 5-phospho-alpha-D-ribose 1-diphosphate + anthranilate. It participates in amino-acid biosynthesis; L-tryptophan biosynthesis; L-tryptophan from chorismate: step 2/5. Catalyzes the transfer of the phosphoribosyl group of 5-phosphorylribose-1-pyrophosphate (PRPP) to anthranilate to yield N-(5'-phosphoribosyl)-anthranilate (PRA). The sequence is that of Anthranilate phosphoribosyltransferase from Synechococcus elongatus (strain ATCC 33912 / PCC 7942 / FACHB-805) (Anacystis nidulans R2).